Here is a 513-residue protein sequence, read N- to C-terminus: Bifunctional purine biosynthesis protein PurH (513 aa).

One can recognise an MGS-like domain in the interval 1 to 144 (MSKRALISVS…KNHERVGIVV (144 aa)).

This sequence belongs to the PurH family.

The catalysed reaction is (6R)-10-formyltetrahydrofolate + 5-amino-1-(5-phospho-beta-D-ribosyl)imidazole-4-carboxamide = 5-formamido-1-(5-phospho-D-ribosyl)imidazole-4-carboxamide + (6S)-5,6,7,8-tetrahydrofolate. It catalyses the reaction IMP + H2O = 5-formamido-1-(5-phospho-D-ribosyl)imidazole-4-carboxamide. The protein operates within purine metabolism; IMP biosynthesis via de novo pathway; 5-formamido-1-(5-phospho-D-ribosyl)imidazole-4-carboxamide from 5-amino-1-(5-phospho-D-ribosyl)imidazole-4-carboxamide (10-formyl THF route): step 1/1. It participates in purine metabolism; IMP biosynthesis via de novo pathway; IMP from 5-formamido-1-(5-phospho-D-ribosyl)imidazole-4-carboxamide: step 1/1. This chain is Bifunctional purine biosynthesis protein PurH, found in Moorella thermoacetica (strain ATCC 39073 / JCM 9320).